Here is a 578-residue protein sequence, read N- to C-terminus: Longifolene synthase (578 aa).

3 residues coordinate Mg(2+): aspartate 331, aspartate 335, and aspartate 475. The short motif at 331 to 335 is the DDXXD motif element; that stretch reads DDLYD.

It belongs to the terpene synthase family. Tpsd subfamily. Mg(2+) serves as cofactor. Requires Mn(2+) as cofactor.

It localises to the cytoplasm. The catalysed reaction is (2E,6E)-farnesyl diphosphate = longifolene + diphosphate. It participates in sesquiterpene biosynthesis. It functions in the pathway terpene metabolism; oleoresin biosynthesis. In terms of biological role, involved in defensive oleoresin formation in conifers in response to insect attack or other injury. Involved in sesquiterpene (C15) olefins biosynthesis. Produces mainly longifolene, but also multiple minor products including alpha-longipinene, alpha-longicyclene, E-beta-farnesene, longiborneol, cyclosativene, beta-longipinene, and 12 other sesquiterpenes when used with farnesyl diphosphate (FPP) as substrate. The chain is Longifolene synthase (TPS-Lon) from Picea abies (Norway spruce).